The primary structure comprises 471 residues: Putative multidrug resistance protein MdtD (471 aa).

Over 1–11 the chain is Periplasmic; sequence MTDLPDSTRWQ. A helical transmembrane segment spans residues 12–32; that stretch reads LWIVAFGFFMQSLDTTIVNTA. At 33–48 the chain is on the cytoplasmic side; sequence LPSMAQSLGESPLHMH. Residues 49–69 form a helical membrane-spanning segment; it reads MVIVSYVLTVAVMLPASGWLA. The Periplasmic portion of the chain corresponds to 70–76; sequence DKVGVRN. Residues 77-97 traverse the membrane as a helical segment; the sequence is IFFTAIVLFTLGSLFCALSAT. Residues 98 to 101 lie on the Cytoplasmic side of the membrane; the sequence is LNEL. Residues 102-124 traverse the membrane as a helical segment; it reads LLARALQGVGGAMMVPVGRLTVM. The Periplasmic segment spans residues 125–137; sequence KIVPREQYMAAMT. A helical transmembrane segment spans residues 138–158; it reads FVTLPGQVGPLLGPALGGLLV. Topologically, residues 159-164 are cytoplasmic; that stretch reads EYASWH. A helical transmembrane segment spans residues 165 to 185; the sequence is WIFLINIPVGIIGAIATLMLM. At 186–196 the chain is on the periplasmic side; that stretch reads PNYTMQTRRFD. The chain crosses the membrane as a helical span at residues 197-217; that stretch reads LSGFLLLAVGMAVLTLALDGS. Residues 218-224 lie on the Cytoplasmic side of the membrane; it reads KGTGLSP. The helical transmembrane segment at 225 to 245 threads the bilayer; the sequence is LAIAGLAAIGVVALVLYLLHA. Over 246 to 262 the chain is Periplasmic; sequence RNNNRALFSLKLFRTRT. Residues 263-283 form a helical membrane-spanning segment; it reads FSLGLAGSFAGRIGSGMLPFM. The Cytoplasmic portion of the chain corresponds to 284–285; sequence TP. Residues 286-306 form a helical membrane-spanning segment; that stretch reads VFLQIGLGFSPFHAGLMMIPM. Topologically, residues 307 to 341 are periplasmic; sequence VLGSMGMKRIVVQVVNRFGYRRVLVATTLGLSLVT. Residues 342-362 form a helical membrane-spanning segment; the sequence is LLFMTTALLGWYYVLPFVLFL. Topologically, residues 363–395 are cytoplasmic; that stretch reads QGMVNSTRFSSMNTLTLKDLPDNLASSGNSLLS. Residues 396–416 traverse the membrane as a helical segment; it reads MIMQLSMSIGVTIAGLLLGLF. The Periplasmic segment spans residues 417 to 430; the sequence is GSQHVSVDSSTTQT. A helical membrane pass occupies residues 431–451; the sequence is VFMYTWLSMALIIALPAFIFA. Over 452–471 the chain is Cytoplasmic; the sequence is RVPNDTHQNVAISRRKRSAQ.

It belongs to the major facilitator superfamily. TCR/Tet family.

Its subcellular location is the cell inner membrane. The protein is Putative multidrug resistance protein MdtD of Escherichia fergusonii (strain ATCC 35469 / DSM 13698 / CCUG 18766 / IAM 14443 / JCM 21226 / LMG 7866 / NBRC 102419 / NCTC 12128 / CDC 0568-73).